The primary structure comprises 860 residues: Transforming growth factor-beta receptor-associated protein 1 (860 aa).

The region spanning 24–297 (RVNIECVECC…HILQDFEGRV (274 aa)) is the CNH domain. One copy of the CHCR repeat lies at 564-728 (RPLDEQQKNS…LLAIYLHAGP (165 aa)).

The protein belongs to the TRAP1 family. Interacts with TGFBR2 and ACVR2B; in the absence of ligand stimulation. Interacts with TGFBR1, ACVRL1, BMPR1A and ACVR1B; in the absence of ligand stimulation and to a less extent. Interacts with SMAD4; the interaction seems to be mutually exclusive with the interaction of SMAD4 and phosphorylated SMAD2. May interact with ALOX5. Interacts with RAB5C. Interacts with VPS8, VPS11 and VPS16. Component of the putative class C core vacuole/endosome tethering (CORVET) complex; the core of which composed of the class C Vps proteins VPS11, VPS16, VPS18 and VPS33A, is associated with VPS8 and TGFBRAP1.

The protein localises to the cytoplasm. The protein resides in the early endosome. Its function is as follows. Plays a role in the TGF-beta/activin signaling pathway. It associates with inactive heteromeric TGF-beta and activin receptor complexes, mainly through the type II receptor, and is released upon activation of signaling. May recruit SMAD4 to the vicinity of the receptor complex and facilitate its interaction with receptor-regulated Smads, such as SMAD2. In terms of biological role, plays a role in vesicle-mediated protein trafficking of the endocytic membrane transport pathway. Believed to act as a component of the putative CORVET endosomal tethering complexes which is proposed to be involved in the Rab5-to-Rab7 endosome conversion probably implicating MON1A/B, and via binding SNAREs and SNARE complexes to mediate tethering and docking events during SNARE-mediated membrane fusion. The CORVET complex is proposed to function as a Rab5 effector to mediate early endosome fusion probably in specific endosome subpopulations. Functions predominantly in APPL1-containing endosomes and in degradative but not recycling trafficking of endocytosed cargo. This is Transforming growth factor-beta receptor-associated protein 1 (TGFBRAP1) from Homo sapiens (Human).